The following is a 569-amino-acid chain: Phosphatase and actin regulator 2 (569 aa).

Polar residues predominate over residues 1–13 (MGQTSVSALSPQP). Residues 1-47 (MGQTSVSALSPQPGSVDGLDKASIANSDGPPAGSQTPPFKRKGKLST) are disordered. Ser-27 bears the Phosphoserine mark. Position 36 is a phosphothreonine (Thr-36). Residues 71 to 96 (AVLERKISTRQSREELIRRGLLKELP) form an RPEL 1 repeat. 2 disordered regions span residues 98–253 (QDGD…TGKP) and 295–483 (PTLP…QEAK). The span at 140-151 (GPPREEQAEEKT) shows a compositional bias: basic and acidic residues. The span at 162 to 176 (GSKASSSPSASSTSS) shows a compositional bias: low complexity. Polar residues predominate over residues 212–224 (LSPNTVTSETSSL). The residue at position 357 (Ser-357) is a Phosphoserine. Residues 386 to 399 (TDDDDEEDDDDDST) show a composition bias toward acidic residues. 3 RPEL repeats span residues 412–437 (DTLA…QRTS), 450–475 (TKLV…KQKN), and 488–513 (RRLS…RFNE). Residues 423–444 (SKKELEDKNILQRTSEEERQEL) show a composition bias toward basic and acidic residues. Ser-457 is modified (phosphoserine). Over residues 461-483 (TTEELEQRSILKQKNEEEEQEAK) the composition is skewed to basic and acidic residues. At Ser-495 the chain carries Phosphoserine.

This sequence belongs to the phosphatase and actin regulator family. Binds PPP1CA and actin. As to expression, expressed in the brain with high levels in the cerebellum, specifically in the Purkinje cell layer, choroid plexus and thalamus (ventral, rhomboid and anterior nuclei). Moderate to high expression in the hippocampus, piriform cortex, olfactory bulb, entorhinal cortex, as well as in geniculate bodies, lamboid septal zone, preoptic area and ventral pallidum (at protein level).

This chain is Phosphatase and actin regulator 2 (Phactr2), found in Rattus norvegicus (Rat).